A 438-amino-acid chain; its full sequence is Coenzyme A disulfide reductase (438 aa).

8–33 (GAVAGGATCASQIRRLDKESDIIIFE) contributes to the FAD binding site. Substrate contacts are provided by Thr15, Gln19, Arg22, Ser39, and Asn42. The active-site Nucleophile is Cys43. Cys43 functions as the Redox-active in the catalytic mechanism. A substrate-binding site is contributed by Lys71. Residue 151–166 (VLVVGAGYVSLEVLEN) coordinates NADP(+). 267-277 (TNVPNIYAIGD) serves as a coordination point for FAD. His299 provides a ligand contact to substrate. An FAD-binding site is contributed by Tyr419. Substrate is bound at residue Lys427.

This sequence belongs to the class-III pyridine nucleotide-disulfide oxidoreductase family. As to quaternary structure, homodimer. FAD serves as cofactor.

The catalysed reaction is NADP(+) + 2 CoA = CoA-disulfide + NADPH + H(+). In terms of biological role, catalyzes specifically the NADPH-dependent reduction of coenzyme A disulfide. Is also active with other disulfide substrates containing at least one 4'-phosphopantethienyl moiety such as 4,4'-diphosphopantethine, but is not able to reduce oxidized glutathione, cystine, pantethine, or H(2)O(2). The sequence is that of Coenzyme A disulfide reductase (cdr) from Staphylococcus aureus (strain NCTC 8325 / PS 47).